A 216-amino-acid chain; its full sequence is MNNMNVIIADDHPIVLFGIRKSLEQIEWVNVVGEFEDSTALINNLPKLDAHVLITDLSMPGDKYGDGITLIKYIKRHFPSLSIIVLTMNNNPAILSAVLDLDIEGIVLKQGAPTDLPKALAALQKGKKFTPESVSRLLEKISAGGYGDKRLSPKESEVLRLFAEGFLVTEIAKKLNRSIKTISSQKKSAMMKLGVENDIALLNYLSSVTLSPADKD.

A Response regulatory domain is found at 5-124; the sequence is NVIIADDHPI…DLPKALAALQ (120 aa). Position 56 is a 4-aspartylphosphate (aspartate 56). An HTH luxR-type domain is found at 144–209; the sequence is GGYGDKRLSP…ALLNYLSSVT (66 aa). Residues 168 to 187 constitute a DNA-binding region (H-T-H motif); that stretch reads VTEIAKKLNRSIKTISSQKK.

This sequence belongs to the RcsB family. As to quaternary structure, interacts with RcsD and RcsA. In terms of processing, phosphorylated and activated by RcsD.

Component of the Rcs signaling system, which controls transcription of numerous genes. RcsB is the response regulator that binds to regulatory DNA regions. Can function both in an RcsA-dependent or RcsA-independent manner. This is Transcriptional regulatory protein RcsB from Escherichia coli O157:H7.